The chain runs to 561 residues: Potassium-transporting ATPase potassium-binding subunit (561 aa).

The next 10 membrane-spanning stretches (helical) occupy residues 4–24 (IIMQ…PLGI), 65–85 (AGSV…VLML), 134–154 (GLTV…FAVI), 177–197 (LYIL…QGVV), 253–273 (FTNL…VVMF), 285–305 (AIMT…TISE), 380–400 (GLYG…LLVG), 417–437 (MVCL…AFAV), 484–504 (MVGA…ALYL), and 528–548 (FIGL…LPAL).

The protein belongs to the KdpA family. In terms of assembly, the system is composed of three essential subunits: KdpA, KdpB and KdpC.

Its subcellular location is the cell membrane. Its function is as follows. Part of the high-affinity ATP-driven potassium transport (or Kdp) system, which catalyzes the hydrolysis of ATP coupled with the electrogenic transport of potassium into the cytoplasm. This subunit binds the extracellular potassium ions and delivers the ions to the membrane domain of KdpB through an intramembrane tunnel. This is Potassium-transporting ATPase potassium-binding subunit from Listeria welshimeri serovar 6b (strain ATCC 35897 / DSM 20650 / CCUG 15529 / CIP 8149 / NCTC 11857 / SLCC 5334 / V8).